We begin with the raw amino-acid sequence, 239 residues long: Phosphoribosylaminoimidazole-succinocarboxamide synthase (239 aa).

This sequence belongs to the SAICAR synthetase family.

It catalyses the reaction 5-amino-1-(5-phospho-D-ribosyl)imidazole-4-carboxylate + L-aspartate + ATP = (2S)-2-[5-amino-1-(5-phospho-beta-D-ribosyl)imidazole-4-carboxamido]succinate + ADP + phosphate + 2 H(+). The protein operates within purine metabolism; IMP biosynthesis via de novo pathway; 5-amino-1-(5-phospho-D-ribosyl)imidazole-4-carboxamide from 5-amino-1-(5-phospho-D-ribosyl)imidazole-4-carboxylate: step 1/2. The chain is Phosphoribosylaminoimidazole-succinocarboxamide synthase from Bacillus cereus (strain B4264).